The following is a 289-amino-acid chain: Rhodopsin (289 aa).

Residues Tyr-1–Ala-7 lie on the Extracellular side of the membrane. Residues Tyr-8 to Val-32 traverse the membrane as a helical segment. Residues Thr-33–Asn-44 lie on the Cytoplasmic side of the membrane. A helical membrane pass occupies residues Tyr-45–Tyr-67. Topologically, residues Thr-68–Cys-81 are extracellular. Cys-81 and Cys-158 are disulfide-bonded. The chain crosses the membrane as a helical span at residues Asn-82–Ile-104. The 'Ionic lock' involved in activated form stabilization signature appears at Glu-105–Trp-107. The Cytoplasmic portion of the chain corresponds to Glu-105–Asn-123. A helical membrane pass occupies residues Ala-124–Val-144. Over Gly-145 to Ser-173 the chain is Extracellular. Residue Asn-171 is glycosylated (N-linked (GlcNAc...) asparagine). A helical transmembrane segment spans residues Phe-174 to Gly-195. Residues Arg-196–Arg-223 are Cytoplasmic-facing. The helical transmembrane segment at Met-224–Trp-245 threads the bilayer. At Ile-246–Ile-257 the chain is on the extracellular side. A helical membrane pass occupies residues Phe-258–Cys-279. Lys-267 is modified (N6-(retinylidene)lysine). The Cytoplasmic segment spans residues Met-280–Ile-289.

The protein belongs to the G-protein coupled receptor 1 family. Opsin subfamily. Phosphorylated on some or all of the serine and threonine residues present in the C-terminal region. In terms of processing, contains one covalently linked retinal chromophore.

It localises to the membrane. Its subcellular location is the cell projection. The protein localises to the cilium. The protein resides in the photoreceptor outer segment. Photoreceptor required for image-forming vision at low light intensity. While most salt water fish species use retinal as chromophore, most freshwater fish use 3-dehydroretinal, or a mixture of retinal and 3-dehydroretinal. Light-induced isomerization of 11-cis to all-trans retinal triggers a conformational change that activates signaling via G-proteins. Subsequent receptor phosphorylation mediates displacement of the bound G-protein alpha subunit by arrestin and terminates signaling. In Batrachocottus multiradiatus (Baikal sculpin), this protein is Rhodopsin (rho).